The following is a 61-amino-acid chain: Large ribosomal subunit protein bL32 (61 aa).

A compositionally biased stretch (basic residues) spans 1–16 (MAVPKKKTSKSRKNMR). A disordered region spans residues 1 to 20 (MAVPKKKTSKSRKNMRRAHD).

The protein belongs to the bacterial ribosomal protein bL32 family.

The polypeptide is Large ribosomal subunit protein bL32 (Trichlorobacter lovleyi (strain ATCC BAA-1151 / DSM 17278 / SZ) (Geobacter lovleyi)).